A 300-amino-acid polypeptide reads, in one-letter code: Diphthine methyl ester synthase (300 aa).

S-adenosyl-L-methionine-binding positions include L9, D85, G88, 113–114, L164, L222, and H247; that span reads SV.

This sequence belongs to the diphthine synthase family.

The protein localises to the cytoplasm. It carries out the reaction 2-[(3S)-amino-3-carboxypropyl]-L-histidyl-[translation elongation factor 2] + 4 S-adenosyl-L-methionine = diphthine methyl ester-[translation elongation factor 2] + 4 S-adenosyl-L-homocysteine + 3 H(+). It functions in the pathway protein modification; peptidyl-diphthamide biosynthesis. S-adenosyl-L-methionine-dependent methyltransferase that catalyzes four methylations of the modified target histidine residue in translation elongation factor 2 (EF-2), to form an intermediate called diphthine methyl ester. The four successive methylation reactions represent the second step of diphthamide biosynthesis. This Yarrowia lipolytica (strain CLIB 122 / E 150) (Yeast) protein is Diphthine methyl ester synthase (DPH5).